The chain runs to 347 residues: D-alanine--D-alanine ligase (347 aa).

Residues 131-333 (KRVLESAGIA…YPELIERLVD (203 aa)) form the ATP-grasp domain. 161 to 216 (EEKLAYPVFTKPSNMGSSVGISKSENQEELRQALELAFRYDSRVLVEQGVNAREIE) is an ATP binding site. Mg(2+) contacts are provided by Asp-287, Glu-300, and Asn-302.

The protein belongs to the D-alanine--D-alanine ligase family. Mg(2+) is required as a cofactor. Mn(2+) serves as cofactor.

It is found in the cytoplasm. The catalysed reaction is 2 D-alanine + ATP = D-alanyl-D-alanine + ADP + phosphate + H(+). It functions in the pathway cell wall biogenesis; peptidoglycan biosynthesis. Its function is as follows. Cell wall formation. The protein is D-alanine--D-alanine ligase of Streptococcus pneumoniae (strain CGSP14).